The chain runs to 301 residues: Probable tRNA pseudouridine synthase B (301 aa).

The active-site Nucleophile is D54. One can recognise a PUA domain in the interval 227-301; it reads LPRLTIADSA…VVVALERVLV (75 aa).

Belongs to the pseudouridine synthase TruB family. Type 2 subfamily.

The catalysed reaction is uridine(55) in tRNA = pseudouridine(55) in tRNA. Its function is as follows. Could be responsible for synthesis of pseudouridine from uracil-55 in the psi GC loop of transfer RNAs. This is Probable tRNA pseudouridine synthase B from Halobacterium salinarum (strain ATCC 29341 / DSM 671 / R1).